The primary structure comprises 309 residues: MDFSTPVLKHVEKHIQHRIHFMNTTVYQSSRYKGGAYTTSHLIFNPKIGKFEILVNASVSFGNELNKTFEELGFNSLPSADDLEKDTKDVNETGRKYLLEAYAGLKVKRAGVYAGILDTTSFFDTNEYANDEQNQFLNTDLVNNPLAVLPSYNPGLILNLNLSHNFSLQFGWAQGDPDTESVYLMQFGFSSEDYHVYFYYTHSPFEEVKSLGISSDYTFENLGFFFRFGKNNLEDYKYFVSGGSVLNLGKEEIGFGYAFRKGNKLKDVNVLEIYFKHVLSSYLHITFDYQLIDDVRNTYVLGFRLNFEY.

This sequence belongs to the OprB family.

This is an uncharacterized protein from Aquifex aeolicus (strain VF5).